Reading from the N-terminus, the 94-residue chain is Acylphosphatase (94 aa).

One can recognise an Acylphosphatase-like domain in the interval 7–94 (AALVRITGRV…EAPAGFRITR (88 aa)). Catalysis depends on residues Arg-22 and Asn-40.

The protein belongs to the acylphosphatase family.

It catalyses the reaction an acyl phosphate + H2O = a carboxylate + phosphate + H(+). The chain is Acylphosphatase (acyP) from Sinorhizobium medicae (strain WSM419) (Ensifer medicae).